The primary structure comprises 78 residues: U-scoloptoxin(15)-Ssm2a (78 aa).

A signal peptide spans 1-23 (MEKKIIFLCFFVSLLTLPEFISS). An important for inhibition of KCNQ4 region spans residues 34–37 (PEKK). 2 disulfides stabilise this stretch: C44-C70 and C48-C72.

It belongs to the SLPTX(15) family. As to expression, expressed by the venom gland.

It localises to the secreted. This Scolopendra mutilans (Chinese red-headed centipede) protein is U-scoloptoxin(15)-Ssm2a.